The chain runs to 498 residues: N-acyl-D-aspartate deacylase (498 aa).

A disordered region spans residues 478–498 (AERPGQVLAPGDAIPWSQQSE).

Belongs to the metallo-dependent hydrolases superfamily. N-acyl-D-amino-acid deacylase family. Zn(2+) is required as a cofactor.

The protein resides in the cytoplasm. The enzyme catalyses an N-acyl-D-aspartate + H2O = D-aspartate + a carboxylate. The chain is N-acyl-D-aspartate deacylase from Alcaligenes xylosoxydans xylosoxydans (Achromobacter xylosoxidans).